We begin with the raw amino-acid sequence, 472 residues long: Eukaryotic translation initiation factor 2 subunit 3 (472 aa).

Position 2 is an N-acetylalanine (A2). S16 is modified (phosphoserine). Residues 39–248 form the tr-type G domain; the sequence is QATINIGTIG…IVKKIPVPPR (210 aa). The tract at residues 48-55 is G1; that stretch reads GHVAHGKS. Residue 51–56 coordinates GTP; it reads AHGKST. Residues 76-80 are G2; sequence NITIK. The interval 134–137 is G3; it reads DCPG. GTP is bound by residues 190–193 and 225–227; these read NKID and SAQ. Positions 190 to 193 are G4; the sequence is NKID. The segment at 225–227 is G5; that stretch reads SAQ. Residues 457-469 form an interacts with CDC123 region; it reads GQIRRGVTIKPTV.

This sequence belongs to the TRAFAC class translation factor GTPase superfamily. Classic translation factor GTPase family. EIF2G subfamily. As to quaternary structure, eukaryotic translation initiation factor 2 eIF2 is a heterotrimeric complex composed of an alpha (EIF2S1), a beta (EIF2S2) and a gamma (EIF2S3) chain. eIF2 is member of the 43S pre-initiation complex (43S PIC). Interacts (via C-terminus) with CDC123; the interaction is direct.

It localises to the cytoplasm. The protein localises to the cytosol. It carries out the reaction GTP + H2O = GDP + phosphate + H(+). In terms of biological role, member of the eIF2 complex that functions in the early steps of protein synthesis by forming a ternary complex with GTP and initiator tRNA. This complex binds to a 40S ribosomal subunit, followed by mRNA binding to form the 43S pre-initiation complex (43S PIC). Junction of the 60S ribosomal subunit to form the 80S initiation complex is preceded by hydrolysis of the GTP bound to eIF2 and release of an eIF2-GDP binary complex. In order for eIF2 to recycle and catalyze another round of initiation, the GDP bound to eIF2 must exchange with GTP by way of a reaction catalyzed by eIF-2B. The chain is Eukaryotic translation initiation factor 2 subunit 3 (EIF2S3) from Bos taurus (Bovine).